A 123-amino-acid chain; its full sequence is UPF0738 protein BCE_1319 (123 aa).

It belongs to the UPF0738 family.

The protein is UPF0738 protein BCE_1319 of Bacillus cereus (strain ATCC 10987 / NRS 248).